Reading from the N-terminus, the 1274-residue chain is Clustered mitochondria protein homolog (1274 aa).

The interval 1–53 (MAQTNGELEHSKGMSSPAVRISQAQKSTKLTVDPESPEQVANGTHAEGEQPEE) is disordered. TPR repeat units follow at residues 293–326 (SPSF…PNNP), 510–543 (DYGG…KKHP), and 628–661 (AKEA…ERVD). The Clu domain maps to 342 to 586 (DITRSQENYL…RVTPLDVMWQ (245 aa)). Disordered regions lie at residues 631–655 (AAKK…EEAL) and 893–925 (VSNG…ARAA). TPR repeat units lie at residues 998–1031 (AKLY…TERT), 1040–1073 (ILSY…WKII), 1082–1115 (ITTM…CESL), and 1124–1157 (ATIL…FLQQ). The segment at 1197 to 1274 (INMTPRTLGT…KLRGSKKSSA (78 aa)) is disordered. Polar residues predominate over residues 1200–1217 (TPRTLGTRVQPQVGQTAP).

The protein belongs to the CLU family. As to quaternary structure, may associate with the eukaryotic translation initiation factor 3 (eIF-3) complex.

The protein resides in the cytoplasm. MRNA-binding protein involved in proper cytoplasmic distribution of mitochondria. This is Clustered mitochondria protein homolog from Aspergillus terreus (strain NIH 2624 / FGSC A1156).